A 1083-amino-acid polypeptide reads, in one-letter code: Protein HOS4 (1083 aa).

Disordered regions lie at residues 1–233 and 267–328; these read MNET…RKLV and SSLF…YRDS. Phosphoserine occurs at positions 14 and 16. Positions 24–62 are enriched in basic and acidic residues; that stretch reads TRREELEKISKQETSEEEDTAGKHEQRETLSEEVSDKFP. Residue Thr37 is modified to Phosphothreonine. Ser67 bears the Phosphoserine mark. Residues 67-85 are compositionally biased toward polar residues; that stretch reads SFRSQTTSVHQATQNNLNA. The segment covering 86-118 has biased composition (basic and acidic residues); that stretch reads KESEDLAHKNDASSHEGEVNGDSRPDDVPETNE. The segment covering 135–149 has biased composition (polar residues); the sequence is PNVRNVDIQNHQPFS. The span at 151–166 shows a compositional bias: basic and acidic residues; that stretch reads DQLRAMLKEPKRKTVD. Residues 167–185 show a composition bias toward acidic residues; that stretch reads DFIEEEGLGAVEEEDLSDE. The segment covering 186 to 207 has biased composition (basic and acidic residues); the sequence is VLEKNTTEPENVEKDIEYSDSD. Residues 277 to 293 show a composition bias toward polar residues; the sequence is VKETNNNLSNMNSSPAQ. Ser290 carries the phosphoserine modification. Residues 300 to 310 show a composition bias toward low complexity; it reads VSRSNDSNKSS. A compositionally biased stretch (basic residues) spans 314–323; sequence VSKRPKQKKG. ANK repeat units follow at residues 329-359, 363-392, and 398-427; these read GGRT…DIND, AGNT…DVNI, and FGDT…DPTI. Residues 472 to 516 are disordered; that stretch reads AGIHNDKSKNGNNAHTIDQPPFDNTTKAKNEKAADSPSMASNIDE. A compositionally biased stretch (polar residues) spans 481-496; sequence NGNNAHTIDQPPFDNT. Ser507 carries the phosphoserine modification. 2 ANK repeats span residues 532 to 561 and 593 to 622; these read AGKE…KIDL and NKTS…DPTK. Disordered stretches follow at residues 661 to 742 and 762 to 790; these read HSED…DDNE and DEEK…ISKI. A compositionally biased stretch (acidic residues) spans 665-675; that stretch reads NNDDDDDDDNN. Residue Ser698 is modified to Phosphoserine. Thr700 bears the Phosphothreonine mark. Residues 721–740 show a composition bias toward basic and acidic residues; the sequence is NNDRDVKESTTSDSRKRLDD. Ser778 is modified (phosphoserine).

Identified in the Set3C complex with HOS2, HST1, SNT1, SIF2, CPR1 and SET3.

Functionally, unknown. Component of the Set3C complex, which is required to repress early/middle sporulation genes during meiosis. This chain is Protein HOS4 (HOS4), found in Saccharomyces cerevisiae (strain ATCC 204508 / S288c) (Baker's yeast).